The chain runs to 338 residues: tRNA N6-adenosine threonylcarbamoyltransferase (338 aa).

Fe cation is bound by residues His112 and His116. Residues 135-139 (LVSGG), Asp168, Gly181, and Asn273 contribute to the substrate site. Residue Asp301 coordinates Fe cation.

Belongs to the KAE1 / TsaD family. Fe(2+) serves as cofactor.

It is found in the cytoplasm. The enzyme catalyses L-threonylcarbamoyladenylate + adenosine(37) in tRNA = N(6)-L-threonylcarbamoyladenosine(37) in tRNA + AMP + H(+). Required for the formation of a threonylcarbamoyl group on adenosine at position 37 (t(6)A37) in tRNAs that read codons beginning with adenine. Is involved in the transfer of the threonylcarbamoyl moiety of threonylcarbamoyl-AMP (TC-AMP) to the N6 group of A37, together with TsaE and TsaB. TsaD likely plays a direct catalytic role in this reaction. The sequence is that of tRNA N6-adenosine threonylcarbamoyltransferase from Buchnera aphidicola subsp. Baizongia pistaciae (strain Bp).